We begin with the raw amino-acid sequence, 1034 residues long: Probable isoleucine--tRNA ligase, mitochondrial (1034 aa).

The transit peptide at 1–32 (MISLNNSFFNKRVIVNSFNNYKRSFGTKSQNE) directs the protein to the mitochondrion. The 'HIGH' region motif lies at 94 to 104 (PYANGDLHMGH). The 'KMSKS' region signature appears at 655–659 (KMSKS). An ATP-binding site is contributed by K658.

Belongs to the class-I aminoacyl-tRNA synthetase family.

It is found in the mitochondrion matrix. The enzyme catalyses tRNA(Ile) + L-isoleucine + ATP = L-isoleucyl-tRNA(Ile) + AMP + diphosphate. This chain is Probable isoleucine--tRNA ligase, mitochondrial (mileS), found in Dictyostelium discoideum (Social amoeba).